A 324-amino-acid polypeptide reads, in one-letter code: tRNA uridine(34) hydroxylase (324 aa).

One can recognise a Rhodanese domain in the interval 145–239 (NDKKTIFIDM…YVHDARKNGL (95 aa)). Residue cysteine 199 is the Cysteine persulfide intermediate of the active site.

The protein belongs to the TrhO family.

The catalysed reaction is uridine(34) in tRNA + AH2 + O2 = 5-hydroxyuridine(34) in tRNA + A + H2O. In terms of biological role, catalyzes oxygen-dependent 5-hydroxyuridine (ho5U) modification at position 34 in tRNAs. This chain is tRNA uridine(34) hydroxylase, found in Buchnera aphidicola subsp. Acyrthosiphon pisum (strain Tuc7).